A 611-amino-acid polypeptide reads, in one-letter code: MYSISNKKPSILSMVPLNILKNQDLKVKKDQEKKISFNPVVTPIRPDDYHEKTSRSSSSSHSDSPEFLRINNNKSGHKNGKLKSFESKKLVPLFIGDLHETVTEETLKGIFKKYPSFVSAKVCLDSVTKKSLGHGYLNFEDKEEAEKAMEELNYTKVNGKEIRIMPSLRNTTFRKNFGTNVFFSNLPLNNPLLTTRVFYDTFSRYGKILSCKLDSRKDIGFVYFEDEKTARNVIKMYNNTSFFGKKILCGIHFDKEVRSVPNFETQKSRLDAETIIEKEQSLNEKHSKGNDKESKNIYSSSQNSIFIKNLPTITTRDDILNFFSEVGPIKSIYLSNATKVKYLWAFVTYKNSSDSEKAIKRYNNFYFRGKKLLVTRAQDKEERAKFIESQKISTLFLENLSAVCNKEFLKYLCHQENIRPFKIQIDGYDENSSTYSGFIKFRNFEDATRIFNFLNNRLVGGSIVTTSWERQNNAPKYHDGYGMRNIHTSSHPQITPYYQYSHANSLNSPHMRDLSSMNSSTRSLIKNKNFNKKVLETFEKQVRRGIDFMRFPSATRDENVHGIAEYIFDTYWNRDVLILDKFLSLLNSSPYHEGVLQKQIEEAASSLGFKR.

The segment at Phe-37 to Lys-81 is disordered. Residues Arg-45–Ser-54 show a composition bias toward basic and acidic residues. 4 RRM domains span residues Val-91 to Arg-169, Thr-179 to Ile-247, Asn-303 to Asp-379, and Ser-393 to Gln-471.

The protein localises to the nucleus. The polypeptide is Protein PES4 (PES4) (Saccharomyces cerevisiae (strain ATCC 204508 / S288c) (Baker's yeast)).